Reading from the N-terminus, the 270-residue chain is Type III pantothenate kinase (270 aa).

16–23 is a binding site for ATP; sequence EIGNTTAM. Substrate is bound by residues tyrosine 106 and 113–116; that span reads GADR. The active-site Proton acceptor is the aspartate 115. Aspartate 136 contacts K(+). Threonine 139 serves as a coordination point for ATP. Threonine 191 provides a ligand contact to substrate.

Belongs to the type III pantothenate kinase family. As to quaternary structure, homodimer. It depends on NH4(+) as a cofactor. The cofactor is K(+).

It is found in the cytoplasm. The enzyme catalyses (R)-pantothenate + ATP = (R)-4'-phosphopantothenate + ADP + H(+). It functions in the pathway cofactor biosynthesis; coenzyme A biosynthesis; CoA from (R)-pantothenate: step 1/5. Functionally, catalyzes the phosphorylation of pantothenate (Pan), the first step in CoA biosynthesis. In Chlorobium luteolum (strain DSM 273 / BCRC 81028 / 2530) (Pelodictyon luteolum), this protein is Type III pantothenate kinase.